We begin with the raw amino-acid sequence, 215 residues long: MQRGKFITFEGIDGAGKSTHLAWLASFLRDKGLEVIVTREPGSTALGEQLRQLLLDHRQAMHAETETLLMFAARREHLDKVILPALERGAWVISDRFTDASFAYQGGGRGVPSARLEILEQWVQKGFSPDLTVYFDVPVTISRQRVQSARTADRFELEPDLFFERVRQAYLQRAKQFSERIRVVDGSLSLEEVRTAMVEVVEKFWSAQASSGYRM.

ATP is bound at residue 11–18; that stretch reads GIDGAGKS.

The protein belongs to the thymidylate kinase family.

It catalyses the reaction dTMP + ATP = dTDP + ADP. Phosphorylation of dTMP to form dTDP in both de novo and salvage pathways of dTTP synthesis. This chain is Thymidylate kinase, found in Nitrosomonas eutropha (strain DSM 101675 / C91 / Nm57).